The following is a 284-amino-acid chain: P2R1A-PPP2R2A-interacting phosphatase regulator 1 (284 aa).

Disordered regions lie at residues 1-32 (MAQE…SNSA), 112-198 (EESL…PIKR), and 235-284 (AHTL…LPID). 2 stretches are compositionally biased toward low complexity: residues 152 to 164 (SPSL…SSGL) and 172 to 184 (PTRR…SQSP). The span at 258 to 269 (STGSPVSLSDSR) shows a compositional bias: polar residues.

It belongs to the FAM122 family.

The protein resides in the nucleus. It localises to the cytoplasm. Acts as an inhibitor of serine/threonine-protein phosphatase 2A (PP2A) activity. Potentiates ubiquitin-mediated proteasomal degradation of serine/threonine-protein phosphatase 2A catalytic subunit alpha (PPP2CA). Inhibits PP2A-mediated dephosphorylation of WEE1, promoting ubiquitin-mediated proteolysis of WEE1, thereby releasing G2/M checkpoint. The protein is P2R1A-PPP2R2A-interacting phosphatase regulator 1 of Gallus gallus (Chicken).